The primary structure comprises 141 residues: Lutropin subunit beta (141 aa).

The N-terminal stretch at 1 to 20 (MEMFQGLLLWLLLNTGGAWA) is a signal peptide. 6 disulfide bridges follow: Cys-29-Cys-77, Cys-43-Cys-92, Cys-46-Cys-130, Cys-54-Cys-108, Cys-58-Cys-110, and Cys-113-Cys-120. An N-linked (GlcNAc...) asparagine glycan is attached at Asn-33.

The protein belongs to the glycoprotein hormones subunit beta family. In terms of assembly, heterodimer of a common alpha chain and a unique beta chain which confers biological specificity to thyrotropin, lutropin, follitropin and gonadotropin.

It localises to the secreted. Its function is as follows. Promotes spermatogenesis and ovulation by stimulating the testes and ovaries to synthesize steroids. The protein is Lutropin subunit beta (LHB) of Ailuropoda melanoleuca (Giant panda).